The following is a 215-amino-acid chain: MSKVYDWFDERLEIQAIADDISSKYVPPHVNIFYCLGGITFTCFLVQVATGFAMTFYYRPTVVEAFASVQYIMTEVNFGWLIRSIHRWSASMMVLMMILHVFRVWLTGGFKKPRELTWTTGVIMAVCTVSFGVTGYSLPWDQVGYWAVKIVTGVPDAIPVVGPTIVELLRGGVGVGQATLTRFYSLHTFVLPLLTAVFMLMHFLMIRKQGISGPL.

Residues 32-52 form a helical membrane-spanning segment; the sequence is IFYCLGGITFTCFLVQVATGF. C35 lines the heme c pocket. Heme b contacts are provided by H86 and H100. Transmembrane regions (helical) follow at residues 90–110, 116–136, and 186–206; these read ASMM…TGGF, LTWT…VTGY, and LHTF…FLMI. Residues H187 and H202 each contribute to the heme b site.

It belongs to the cytochrome b family. PetB subfamily. The 4 large subunits of the cytochrome b6-f complex are cytochrome b6, subunit IV (17 kDa polypeptide, PetD), cytochrome f and the Rieske protein, while the 4 small subunits are PetG, PetL, PetM and PetN. The complex functions as a dimer. It depends on heme b as a cofactor. Heme c is required as a cofactor.

It is found in the plastid. It localises to the chloroplast thylakoid membrane. Component of the cytochrome b6-f complex, which mediates electron transfer between photosystem II (PSII) and photosystem I (PSI), cyclic electron flow around PSI, and state transitions. The protein is Cytochrome b6 of Stigeoclonium helveticum (Green alga).